Reading from the N-terminus, the 1149-residue chain is Potassium channel subfamily U member 1 (1149 aa).

The Extracellular segment spans residues 1 to 24 (MFQTKLRNETWEDLPKMSCTTEIQ). Residues 25-45 (AAFILSSFVTFFSGLIILLIF) traverse the membrane as a helical segment. The Cytoplasmic segment spans residues 46-101 (RLIWRSVKKWQIIKGTGIILELFTSGTIARSHVRSLHFQGQFRDHIEMLLSAQTFV). A helical membrane pass occupies residues 102 to 122 (GQVLVILVFVLSIGSLIIYFI). At 123–138 (NSADPVGSCSSYEDKT) the chain is on the extracellular side. A helical membrane pass occupies residues 139–159 (IPIDLVFNAFFSFYFGLRFMA). The Cytoplasmic segment spans residues 160 to 163 (ADDK). Residues 164–184 (IKFWLEMNSIVDIFTIPPTFI) traverse the membrane as a helical segment. At 185–188 (SYYL) the chain is on the extracellular side. Residues 189–209 (KSNWLGLRFLRALRLLELPQI) form a helical; Voltage-sensor membrane-spanning segment. Residues 210–226 (LQILRAIKTSNSVKFSK) are Cytoplasmic-facing. A helical transmembrane segment spans residues 227-247 (LLSIILSTWFTAAGFIHLVEN). Residues 248 to 259 (SGDPWLKGRNSQ) lie on the Extracellular side of the membrane. An intramembrane region (pore-forming) is located at residues 260–282 (NISYFESIYLVMATTSTVGFGDV). Positions 276 to 279 (TVGF) match the Selectivity for potassium motif. The Extracellular portion of the chain corresponds to 283–291 (VAKTSLGRT). Residues 292-312 (FIMFFTLGSLILFANYIPEMV) traverse the membrane as a helical segment. Topologically, residues 313–1149 (ELFANKRKYT…EDPFAYSEPL (837 aa)) are cytoplasmic. RCK N-terminal domains follow at residues 331 to 473 (KKFI…DNII) and 713 to 884 (RNHI…EGSL). Disordered stretches follow at residues 828–854 (QIDSSSDPSPSVSEETPGYTNGHNEKS) and 1118–1149 (SQIPLGDNAKENERKTSDEVYDEDPFAYSEPL). Over residues 830-840 (DSSSDPSPSVS) the composition is skewed to low complexity. The span at 1125 to 1135 (NAKENERKTSD) shows a compositional bias: basic and acidic residues.

Belongs to the potassium channel family. Calcium-activated (TC 1.A.1.3) subfamily. KCa5.1/KCNU1 sub-subfamily. Homotetramer; which constitutes the activated potassium channel. Interacts with LRRC52; this interaction changes channel gating properties, such as shifting gating to more negative potentials at a given pH. As to expression, testis-specific.

Its subcellular location is the cell membrane. It is found in the cell projection. The protein localises to the cilium. It localises to the flagellum membrane. It catalyses the reaction K(+)(in) = K(+)(out). With respect to regulation, regulated by changes in cytosolic pH; activated by alkalization. Activated by intracellular Ca(2+). Despite strong sequence similarity, human KCNU1 channels are significantly more sensitive to activation by internal Ca(2+) and less pH-sensitive than mouse KCNU1. VU0546110 acts as a selective inhibitor. The auxiliary subunit LRRC52 shifts the activation of KCNU1 to more negative potentials at a given pH. In terms of biological role, testis-specific potassium channel activated by both intracellular pH and membrane voltage that mediates export of K(+). Represents the primary spermatozoan K(+) current. The channel underlies a pH-triggered membrane hyperpolarization during the process of sperm capacitation, as sperm encounter the alkaline environment near the ovum in the female reproductive tract, thereby playing an essential for male fertility. The polypeptide is Potassium channel subfamily U member 1 (Homo sapiens (Human)).